The following is a 372-amino-acid chain: N-acetylneuraminate-9-phosphate synthase (372 aa).

Residues 314–372 (SIVAARNLNKGYRLQLADMAIKVSEPSGLTAEDFLDLVGKELADNIGEDEPILGNSIIN) enclose the AFP-like domain.

It catalyses the reaction aldehydo-N-acetyl-D-mannosamine 6-phosphate + phosphoenolpyruvate + H2O = N-acetylneuraminate 9-phosphate + phosphate. It carries out the reaction aldehydo-D-mannose 6-phosphate + phosphoenolpyruvate + H2O = 3-deoxy-D-glycero-beta-D-galacto-non-2-ulopyranosonate 9-phosphate + phosphate. Functionally, catalyzes the condensation of phosphoenolpyruvate (PEP) and N-acetylmannosamine 6-phosphate (ManNAc-6-P) or D-mannose 6-phosphate (Man-6-P) to generate the phosphorylated forms of both the sialic acids N-acetylneuraminic acid (Neu5Ac) and deaminoneuraminic acid (KDN), respectively. Essential for biosynthesis of sialic acids in neurons of the central nervous system. The sequence is that of N-acetylneuraminate-9-phosphate synthase from Drosophila melanogaster (Fruit fly).